Here is a 122-residue protein sequence, read N- to C-terminus: Cofilin/actin-depolymerizing factor homolog 1 (122 aa).

The ADF-H domain occupies Gly4 to Lys122.

The protein belongs to the actin-binding proteins ADF family. As to quaternary structure, interacts with monomeric actin, does not bind to actin polymers.

Its subcellular location is the cytoplasm. It localises to the cytoskeleton. Not involved in actin polymerisation, instead functions to stimulate nucleotide exchange on monomeric actin and influence turnover of the small amount of cytosolic actin microfilaments. Essential for erythrocytic schizogony. This chain is Cofilin/actin-depolymerizing factor homolog 1, found in Plasmodium falciparum (isolate 3D7).